The following is a 293-amino-acid chain: Homoserine kinase (293 aa).

84 to 94 (PLSRGLGSSSA) is an ATP binding site.

Belongs to the GHMP kinase family. Homoserine kinase subfamily.

Its subcellular location is the cytoplasm. It carries out the reaction L-homoserine + ATP = O-phospho-L-homoserine + ADP + H(+). Its pathway is amino-acid biosynthesis; L-threonine biosynthesis; L-threonine from L-aspartate: step 4/5. Its function is as follows. Catalyzes the ATP-dependent phosphorylation of L-homoserine to L-homoserine phosphate. The protein is Homoserine kinase of Nitratiruptor sp. (strain SB155-2).